The primary structure comprises 340 residues: Undecaprenyl-phosphate 4-deoxy-4-formamido-L-arabinose transferase (340 aa).

A run of 2 helical transmembrane segments spans residues 235 to 255 (LSIV…ALIF) and 269 to 289 (LFVL…GMGL).

It belongs to the glycosyltransferase 2 family.

Its subcellular location is the cell inner membrane. It carries out the reaction UDP-4-deoxy-4-formamido-beta-L-arabinose + di-trans,octa-cis-undecaprenyl phosphate = 4-deoxy-4-formamido-alpha-L-arabinopyranosyl di-trans,octa-cis-undecaprenyl phosphate + UDP. The protein operates within glycolipid biosynthesis; 4-amino-4-deoxy-alpha-L-arabinose undecaprenyl phosphate biosynthesis; 4-amino-4-deoxy-alpha-L-arabinose undecaprenyl phosphate from UDP-4-deoxy-4-formamido-beta-L-arabinose and undecaprenyl phosphate: step 1/2. Its pathway is bacterial outer membrane biogenesis; lipopolysaccharide biosynthesis. In terms of biological role, catalyzes the transfer of 4-deoxy-4-formamido-L-arabinose from UDP to undecaprenyl phosphate. The modified arabinose is attached to lipid A and is required for resistance to polymyxin and cationic antimicrobial peptides. The sequence is that of Undecaprenyl-phosphate 4-deoxy-4-formamido-L-arabinose transferase from Pseudomonas fluorescens (strain Pf0-1).